A 369-amino-acid chain; its full sequence is Variable large protein 7 (369 aa).

The signal sequence occupies residues 1–26 (MRKRISAIINKLNISIIIMTVVLMIG). Cys-27 carries N-palmitoyl cysteine lipidation. Cys-27 carries the S-diacylglycerol cysteine lipid modification.

This sequence belongs to the variable large protein (Vlp) family. Alpha subfamily.

The protein localises to the cell outer membrane. Functionally, the Vlp and Vsp proteins are antigenically distinct proteins, only one vlp or vsp gene is transcriptionally active at any one time. Switching between these genes is a mechanism of host immune response evasion. The sequence is that of Variable large protein 7 from Borrelia hermsii.